The sequence spans 75 residues: Small ribosomal subunit protein bS18 (75 aa).

It belongs to the bacterial ribosomal protein bS18 family. Part of the 30S ribosomal subunit. Forms a tight heterodimer with protein bS6.

Binds as a heterodimer with protein bS6 to the central domain of the 16S rRNA, where it helps stabilize the platform of the 30S subunit. This chain is Small ribosomal subunit protein bS18, found in Histophilus somni (strain 129Pt) (Haemophilus somnus).